A 377-amino-acid polypeptide reads, in one-letter code: tRNA-specific 2-thiouridylase MnmA (377 aa).

ATP-binding positions include 17 to 24 (GMSGGVDS) and methionine 43. The interaction with target base in tRNA stretch occupies residues 103-105 (NPD). Cysteine 108 serves as the catalytic Nucleophile. The cysteines at positions 108 and 204 are disulfide-linked. Position 132 (glycine 132) interacts with ATP. The tract at residues 154–156 (KDQ) is interaction with tRNA. Residue cysteine 204 is the Cysteine persulfide intermediate of the active site. The interval 316 to 317 (RY) is interaction with tRNA.

It belongs to the MnmA/TRMU family.

It localises to the cytoplasm. The enzyme catalyses S-sulfanyl-L-cysteinyl-[protein] + uridine(34) in tRNA + AH2 + ATP = 2-thiouridine(34) in tRNA + L-cysteinyl-[protein] + A + AMP + diphosphate + H(+). Its function is as follows. Catalyzes the 2-thiolation of uridine at the wobble position (U34) of tRNA, leading to the formation of s(2)U34. The protein is tRNA-specific 2-thiouridylase MnmA of Pseudomonas fluorescens (strain ATCC BAA-477 / NRRL B-23932 / Pf-5).